Consider the following 245-residue polypeptide: Probable transcriptional regulatory protein Cbei_4222 (245 aa).

This sequence belongs to the TACO1 family.

Its subcellular location is the cytoplasm. The polypeptide is Probable transcriptional regulatory protein Cbei_4222 (Clostridium beijerinckii (strain ATCC 51743 / NCIMB 8052) (Clostridium acetobutylicum)).